Here is a 626-residue protein sequence, read N- to C-terminus: Chaperone protein DnaK (626 aa).

A Phosphothreonine; by autocatalysis modification is found at Thr-175. Disordered stretches follow at residues 469-488 (DKGTGKEQSMTITGGSGLPK), 498-517 (AEAHEAEDKKRKEDAETRNQ), and 583-626 (AQQG…KDNK). A compositionally biased stretch (basic and acidic residues) spans 498–516 (AEAHEAEDKKRKEDAETRN). Over residues 609 to 626 (SDDDVVDAEVVDDDKDNK) the composition is skewed to acidic residues.

Belongs to the heat shock protein 70 family.

Its function is as follows. Acts as a chaperone. This chain is Chaperone protein DnaK, found in Bifidobacterium adolescentis (strain ATCC 15703 / DSM 20083 / NCTC 11814 / E194a).